The chain runs to 134 residues: Protein Turandot E (134 aa).

Positions 1 to 38 (MSNTRTVHSSTSISKMNSALQISCLLVVLGCLLGSGHC) are cleaved as a signal peptide.

This sequence belongs to the Turandot family.

It is found in the secreted. Its function is as follows. A humoral factor that may play a role in stress tolerance. This chain is Protein Turandot E, found in Drosophila melanogaster (Fruit fly).